We begin with the raw amino-acid sequence, 270 residues long: NFAT activation molecule 1 (270 aa).

The N-terminal stretch at 1-42 (MENQPVRWRALPGLPRPPGLPAAPWLLLGVLLLPGTLRLAGG) is a signal peptide. The Extracellular portion of the chain corresponds to 43 to 163 (QSVTHTGLPI…YREPPQSPQK (121 aa)). The Ig-like V-type domain occupies 50–150 (LPIMASLANT…RGSGTFILVR (101 aa)). Residues cysteine 65 and cysteine 114 are joined by a disulfide bond. A glycan (N-linked (GlcNAc...) asparagine) is linked at asparagine 107. Residues 164–184 (LLLFGFTGLLSVLSVVGTALL) form a helical membrane-spanning segment. At 185–270 (LWNKKRMRGP…GELNLVYENL (86 aa)) the chain is on the cytoplasmic side. A disordered region spans residues 190 to 219 (RMRGPGKDPTRKCPDPRSASSPKQHPSESV). Positions 194-204 (PGKDPTRKCPD) are enriched in basic and acidic residues. Residues 207 to 219 (SASSPKQHPSESV) show a composition bias toward polar residues. Residues 209 to 237 (SSPKQHPSESVYTALQRRETEVYACIENE) form the ITAM domain. Residues tyrosine 220 and tyrosine 231 each carry the phosphotyrosine modification. The segment at 234-262 (IENEDGSSPTAKQSPLSQERPHRFEDDGE) is disordered. A compositionally biased stretch (polar residues) spans 239–250 (GSSPTAKQSPLS).

No direct interaction with the B-cell antigen receptor (BCR). Interacts with SYK; probably involved in BCR signaling. Interacts with ZAP70. In terms of processing, N-glycosylated. Highly expressed in neutrophils, primary monocytes, mast cells, monocytic cell lines and lymphocytes. Also expressed in spleen B and T-cells, and lung. Expressed at low level in non-immune tissue.

The protein resides in the cell membrane. In terms of biological role, may function in immune system as a receptor which activates via the calcineurin/NFAT-signaling pathway the downstream cytokine gene promoters. Activates the transcription of IL-13 and TNF-alpha promoters. May be involved in the regulation of B-cell, but not T-cell, development. Overexpression activates downstream effectors without ligand binding or antibody cross-linking. The sequence is that of NFAT activation molecule 1 (NFAM1) from Homo sapiens (Human).